The sequence spans 1049 residues: Bifunctional cytochrome P450/NADPH--P450 reductase (1049 aa).

Residues 2-472 (TIKEMPQPKT…STEQSAKKVR (471 aa)) are cytochrome P450. Tyrosine 52 contacts (9Z)-hexadecenoate. Heme is bound at residue cysteine 401. Residues 473-1049 (KKAENAHNTP…GRYAKDVWAG (577 aa)) form an NADPH--P450 reductase region. Residues 483-622 (LLVLYGSNMG…TYEEWREHMW (140 aa)) enclose the Flavodoxin-like domain. FMN is bound by residues 489–494 (SNMGTA), 536–539 (SYNG), 570–572 (CGD), and 578–580 (TYQ). Residues 660–892 (HGAFSTNVVA…STPQSEFTLP (233 aa)) enclose the FAD-binding FR-type domain.

The protein in the N-terminal section; belongs to the cytochrome P450 family. FAD serves as cofactor. FMN is required as a cofactor. Requires heme as cofactor.

The protein resides in the cytoplasm. The catalysed reaction is 2 oxidized [cytochrome P450] + NADPH = 2 reduced [cytochrome P450] + NADP(+) + H(+). It catalyses the reaction an organic molecule + reduced [NADPH--hemoprotein reductase] + O2 = an alcohol + oxidized [NADPH--hemoprotein reductase] + H2O + H(+). Inhibited by N-(12-imidazolyl-dodecanoyl)-L-leucine. Functions as a fatty acid monooxygenase. Catalyzes hydroxylation of fatty acids at omega-1, omega-2 and omega-3 positions. Shows activity toward medium and long-chain fatty acids, with optimum chain lengths of 12, 14 and 16 carbons (lauric, myristic, and palmitic acids). Able to metabolize some of these primary metabolites to secondary and tertiary products. Marginal activity towards short chain lengths of 8-10 carbons. Hydroxylates highly branched fatty acids, which play an essential role in membrane fluidity regulation. Also displays a NADPH-dependent reductase activity in the C-terminal domain, which allows electron transfer from NADPH to the heme iron of the cytochrome P450 N-terminal domain. Involved in inactivation of quorum sensing signals of other competing bacteria by oxidazing efficiently acyl homoserine lactones (AHLs), molecules involved in quorum sensing signaling pathways, and their lactonolysis products acyl homoserines (AHs). The protein is Bifunctional cytochrome P450/NADPH--P450 reductase of Priestia megaterium (strain ATCC 14581 / DSM 32 / CCUG 1817 / JCM 2506 / NBRC 15308 / NCIMB 9376 / NCTC 10342 / NRRL B-14308 / VKM B-512 / Ford 19) (Bacillus megaterium).